The chain runs to 405 residues: Indoleamine 2,3-dioxygenase 2 (405 aa).

His347 contributes to the heme binding site.

The protein belongs to the indoleamine 2,3-dioxygenase family. It depends on heme as a cofactor. Expressed mainly in antigen-presenting immune cells, liver, kidney, brain, and placenta. Highly expressed in kidney, followed by epididymis and liver (at protein level). Detected in the tails of the spermatozoa in the testis and in the kidney tubules (at protein level). Constitutively expressed in brain.

The enzyme catalyses L-tryptophan + O2 = N-formyl-L-kynurenine. Its pathway is amino-acid degradation; L-tryptophan degradation via kynurenine pathway; L-kynurenine from L-tryptophan: step 1/2. Activity is inhibited by D-1MT (1-methyl-D-tryptophan) and MTH-trp (methylthiohydantoin-DL-tryptophan) but not L-1MT (1-methyl-L-tryptophan). Functionally, catalyzes the first and rate-limiting step in the kynurenine pathway of tryptophan catabolism. Involved in immune regulation. The protein is Indoleamine 2,3-dioxygenase 2 of Mus musculus (Mouse).